Consider the following 709-residue polypeptide: UvrABC system protein B (709 aa).

Residues 35–416 form the Helicase ATP-binding domain; it reads ERVEAGEKDV…YELGQADGYV (382 aa). 48 to 55 provides a ligand contact to ATP; sequence GATGTGKS. The Beta-hairpin motif lies at 101–124; sequence YYDYYQPEAYVPQTDTFIEKDSSI. The Helicase C-terminal domain occupies 438–604; the sequence is QIDDLLEQIR…PLRKRIADIT (167 aa). The region spanning 666 to 701 is the UVR domain; it reads ADLIEQMSQQMHQAAADLQFELAARLRDEVGELKKE.

Belongs to the UvrB family. In terms of assembly, forms a heterotetramer with UvrA during the search for lesions. Interacts with UvrC in an incision complex.

The protein resides in the cytoplasm. Its function is as follows. The UvrABC repair system catalyzes the recognition and processing of DNA lesions. A damage recognition complex composed of 2 UvrA and 2 UvrB subunits scans DNA for abnormalities. Upon binding of the UvrA(2)B(2) complex to a putative damaged site, the DNA wraps around one UvrB monomer. DNA wrap is dependent on ATP binding by UvrB and probably causes local melting of the DNA helix, facilitating insertion of UvrB beta-hairpin between the DNA strands. Then UvrB probes one DNA strand for the presence of a lesion. If a lesion is found the UvrA subunits dissociate and the UvrB-DNA preincision complex is formed. This complex is subsequently bound by UvrC and the second UvrB is released. If no lesion is found, the DNA wraps around the other UvrB subunit that will check the other stand for damage. The sequence is that of UvrABC system protein B from Micrococcus luteus (strain ATCC 4698 / DSM 20030 / JCM 1464 / CCM 169 / CCUG 5858 / IAM 1056 / NBRC 3333 / NCIMB 9278 / NCTC 2665 / VKM Ac-2230) (Micrococcus lysodeikticus).